Consider the following 399-residue polypeptide: Elongation factor Tu (399 aa).

Positions 10 to 209 constitute a tr-type G domain; that stretch reads KPHVNIGTIG…AVDSYIPTPV (200 aa). The segment at 19–26 is G1; sequence GHVDHGKT. 19–26 is a GTP binding site; the sequence is GHVDHGKT. Mg(2+) is bound at residue threonine 26. A G2 region spans residues 60-64; that stretch reads GITIA. A G3 region spans residues 81–84; sequence DCPG. GTP is bound by residues 81 to 85 and 136 to 139; these read DCPGH and NKAD. The tract at residues 136 to 139 is G4; that stretch reads NKAD. The segment at 174–176 is G5; it reads SAL.

This sequence belongs to the TRAFAC class translation factor GTPase superfamily. Classic translation factor GTPase family. EF-Tu/EF-1A subfamily. Monomer.

The protein localises to the cytoplasm. It catalyses the reaction GTP + H2O = GDP + phosphate + H(+). GTP hydrolase that promotes the GTP-dependent binding of aminoacyl-tRNA to the A-site of ribosomes during protein biosynthesis. This chain is Elongation factor Tu, found in Campylobacter concisus (strain 13826).